The primary structure comprises 531 residues: Type 2 DNA topoisomerase 6 subunit B (531 aa).

Residues Asn-42, Asp-76, 97-98, 106-113, and Lys-427 contribute to the ATP site; these read SK and GMYGLGVK.

This sequence belongs to the TOP6B family. Homodimer. Heterotetramer of two Top6A and two Top6B chains.

It catalyses the reaction ATP-dependent breakage, passage and rejoining of double-stranded DNA.. In terms of biological role, relaxes both positive and negative superturns and exhibits a strong decatenase activity. The protein is Type 2 DNA topoisomerase 6 subunit B of Metallosphaera sedula (strain ATCC 51363 / DSM 5348 / JCM 9185 / NBRC 15509 / TH2).